Here is a 104-residue protein sequence, read N- to C-terminus: MHGNIINIEDVILDLVPQPEIDLRCYEQLDYEQFDSSDEDETDNMRDQQARQAGQEVCYRIEAQCCMCNSIVQLAVQSSRQNVRVLEQMLMEDVSLVCHQCAAQ.

Residues 1–47 are E7 terminal domain; it reads MHGNIINIEDVILDLVPQPEIDLRCYEQLDYEQFDSSDEDETDNMRD. The short motif at 23 to 27 is the LXCXE motif; interaction with host RB1 and TMEM173/STING element; the sequence is LRCYE. A zinc finger lies at 65 to 101; it reads CCMCNSIVQLAVQSSRQNVRVLEQMLMEDVSLVCHQC. Residues 83 to 91 carry the Nuclear export signal motif; the sequence is VRVLEQMLM.

This sequence belongs to the papillomaviridae E7 protein family. In terms of assembly, homodimer. Homooligomer. Interacts with host RB1; this interaction induces dissociation of RB1-E2F1 complex thereby disrupting RB1 activity. Interacts with host EP300; this interaction represses EP300 transcriptional activity. Interacts with protein E2; this interaction inhibits E7 oncogenic activity. Interacts with host TMEM173/STING; this interaction impairs the ability of TMEM173/STING to sense cytosolic DNA and promote the production of type I interferon (IFN-alpha and IFN-beta). In terms of processing, highly phosphorylated.

The protein resides in the host cytoplasm. It is found in the host nucleus. Its function is as follows. Plays a role in viral genome replication by driving entry of quiescent cells into the cell cycle. Stimulation of progression from G1 to S phase allows the virus to efficiently use the cellular DNA replicating machinery to achieve viral genome replication. E7 protein has both transforming and trans-activating activities. Induces the disassembly of the E2F1 transcription factor from RB1, with subsequent transcriptional activation of E2F1-regulated S-phase genes. Interferes with host histone deacetylation mediated by HDAC1 and HDAC2, leading to transcription activation. Also plays a role in the inhibition of both antiviral and antiproliferative functions of host interferon alpha. Interaction with host TMEM173/STING impairs the ability of TMEM173/STING to sense cytosolic DNA and promote the production of type I interferon (IFN-alpha and IFN-beta). The polypeptide is Protein E7 (Human papillomavirus type 26).